We begin with the raw amino-acid sequence, 144 residues long: Large ribosomal subunit protein uL15 (144 aa).

The segment at methionine 1–glycine 52 is disordered. Residues arginine 21–glycine 31 are compositionally biased toward gly residues.

Belongs to the universal ribosomal protein uL15 family. As to quaternary structure, part of the 50S ribosomal subunit.

Binds to the 23S rRNA. This Buchnera aphidicola subsp. Acyrthosiphon kondoi (Acyrthosiphon kondoi symbiotic bacterium) protein is Large ribosomal subunit protein uL15.